Reading from the N-terminus, the 354-residue chain is E2F transcription factor-like E2FF (354 aa).

Residues 21 to 86 mediate DNA binding; it reads RKEKSLGVLV…RGKNQYSWKG (66 aa). Residues 104–143 form a disordered region; it reads ERLGYSSSNNSDKVSNGCEREEPLTLTPDDQENSSSSKMD. The span at 108-117 shows a compositional bias: polar residues; it reads YSSSNNSDKV. A DNA-binding region spans residues 145–225; sequence KKEKSLWLLA…TRKPAYRWLG (81 aa).

The protein belongs to the E2F/DP family. As to expression, high expression in young cotyledons and leaves, hypocotyls, shoot apical meristem, roots and mature pollen grains, moderate in developing trichomes, flowers and at early stages of developing anthers, and barely detectable in mature leaves. Not detected in primary root meristem, emerging lateral roots, pistils, developing embryos and siliques.

Its subcellular location is the nucleus. The protein resides in the cytoplasm. Functionally, inhibitor of E2F-dependent activation of gene expression. Binds specifically the E2 recognition site without interacting with DP proteins and prevents transcription activation by E2F/DP heterodimers. Does not bind retinoblastoma-related proteins. Acts as a growth regulator but is not associated with changes in the expression of cell cycle marker genes or in nuclear ploidy levels. Has no effect on cell proliferation, but may repress cell wall biosynthesis genes during cell elongation in differentiated cells. This is E2F transcription factor-like E2FF (E2FF) from Arabidopsis thaliana (Mouse-ear cress).